We begin with the raw amino-acid sequence, 90 residues long: Probable Fe(2+)-trafficking protein (90 aa).

The protein belongs to the Fe(2+)-trafficking protein family.

Its function is as follows. Could be a mediator in iron transactions between iron acquisition and iron-requiring processes, such as synthesis and/or repair of Fe-S clusters in biosynthetic enzymes. In Aliivibrio salmonicida (strain LFI1238) (Vibrio salmonicida (strain LFI1238)), this protein is Probable Fe(2+)-trafficking protein.